The chain runs to 236 residues: Hydantoin racemase (236 aa).

As to quaternary structure, homohexamer, homoheptamer or homooctamer.

It carries out the reaction a D-5-monosubstituted hydantoin = a L-5-monosubstituted hydantoin. The enzyme catalyses D-5-benzylhydantoin = L-5-benzylhydantoin. Its activity is regulated as follows. Completely inhibited by HgCl(2) and iodoacetamide. Stimulated by dithiothreitol. In terms of biological role, involved in the asymmetric conversion of racemic 5-substituted hydantoins to the corresponding L-amino acids. Catalyzes the racemization via enolization of D- and L-5-monosubstituted hydantoins. It shows preference for hydantoins with arylalkyl side chains such as 5-benzylhydantoin (BH) and, to a lesser extent, 5-(3-indolylmethylene)hydantoin (IMH). In Paenarthrobacter aurescens (Arthrobacter aurescens), this protein is Hydantoin racemase.